The primary structure comprises 95 residues: Aspartyl/glutamyl-tRNA(Asn/Gln) amidotransferase subunit C (95 aa).

The protein belongs to the GatC family. Heterotrimer of A, B and C subunits.

The catalysed reaction is L-glutamyl-tRNA(Gln) + L-glutamine + ATP + H2O = L-glutaminyl-tRNA(Gln) + L-glutamate + ADP + phosphate + H(+). The enzyme catalyses L-aspartyl-tRNA(Asn) + L-glutamine + ATP + H2O = L-asparaginyl-tRNA(Asn) + L-glutamate + ADP + phosphate + 2 H(+). Functionally, allows the formation of correctly charged Asn-tRNA(Asn) or Gln-tRNA(Gln) through the transamidation of misacylated Asp-tRNA(Asn) or Glu-tRNA(Gln) in organisms which lack either or both of asparaginyl-tRNA or glutaminyl-tRNA synthetases. The reaction takes place in the presence of glutamine and ATP through an activated phospho-Asp-tRNA(Asn) or phospho-Glu-tRNA(Gln). This chain is Aspartyl/glutamyl-tRNA(Asn/Gln) amidotransferase subunit C, found in Azotobacter vinelandii (strain DJ / ATCC BAA-1303).